The sequence spans 531 residues: Serine-type carboxypeptidase F (531 aa).

The N-terminal stretch at 1–25 (MLFRSLLSTAVLAVSLCTDNASAAK) is a signal peptide. An N-linked (GlcNAc...) asparagine glycan is attached at Asn-20. A propeptide spanning residues 26 to 52 (HGRFGQKARDAMNIAKRSANAVKHSLK) is cleaved from the precursor. Asn-63, Asn-94, and Asn-155 each carry an N-linked (GlcNAc...) asparagine glycan. Ser-211 is a catalytic residue. Asn-228, Asn-271, Asn-309, and Asn-378 each carry an N-linked (GlcNAc...) asparagine glycan. Asp-430 is a catalytic residue. Asn-436 and Asn-444 each carry an N-linked (GlcNAc...) asparagine glycan. His-507 is an active-site residue.

Belongs to the peptidase S10 family. As to quaternary structure, monomer.

Inhibited by DFP, and Hg(Cl)2. Its function is as follows. Removes any amino acid from the C-terminus of a long peptide. Digests preferentially peptides containing a positively charged residue in P1' position, as well as arginine, lysine or phenylalanine in P1 position of ester substrate. Also catalyzes peptide synthesis. The polypeptide is Serine-type carboxypeptidase F (pepF) (Aspergillus niger).